We begin with the raw amino-acid sequence, 320 residues long: Malate dehydrogenase (320 aa).

NAD(+)-binding positions include 10–15 (GSGMIG) and Asp-34. Arg-83 and Arg-89 together coordinate substrate. NAD(+)-binding positions include Asn-96 and 119-121 (ITN). Residues Asn-121 and Arg-152 each coordinate substrate. Catalysis depends on His-176, which acts as the Proton acceptor.

The protein belongs to the LDH/MDH superfamily. MDH type 3 family.

It catalyses the reaction (S)-malate + NAD(+) = oxaloacetate + NADH + H(+). In terms of biological role, catalyzes the reversible oxidation of malate to oxaloacetate. The polypeptide is Malate dehydrogenase (Brucella abortus (strain S19)).